The following is a 954-amino-acid chain: Kinesin-like protein KIN-14A (954 aa).

The 119-residue stretch at 24–142 (ALRRHQAATW…CVISLKSYHE (119 aa)) folds into the Calponin-homology (CH) domain. A coiled-coil region spans residues 242 to 293 (LSRQLEKEQSSNSQVENRRRLLQAQESELLELKSMFQEVKIDFRTLKTQFQD). A Kinesin motor domain is found at 332–651 (NIRVFCRIRP…LKFAQRASCV (320 aa)). An ATP-binding site is contributed by 413–420 (GQTGSGKT). Residues 656–692 (AHANKESNEIRELKEQVENLKRALAAKELEKSSFKLK) adopt a coiled-coil conformation. Basic and acidic residues predominate over residues 697 to 709 (VRERAKQVPERTP). 3 disordered regions span residues 697–743 (VRER…TKLN), 824–858 (NLEVGQTDEPSSSAKLEKMTSSNATKKGSHLRKSI), and 882–954 (PAKI…KRWL). 2 stretches are compositionally biased toward polar residues: residues 831–849 (DEPSSSAKLEKMTSSNATK) and 886–898 (ANSTNNDVPSSIT).

It belongs to the TRAFAC class myosin-kinesin ATPase superfamily. Kinesin family. KIN-14 subfamily.

The protein is Kinesin-like protein KIN-14A of Oryza sativa subsp. japonica (Rice).